A 306-amino-acid chain; its full sequence is C-type lectin domain family 10 member A (306 aa).

Over 1–37 the chain is Cytoplasmic; it reads MTMAYENFQNLGSEEKNQEAGKAPPQSFLCNILSWTH. Residues 38–58 traverse the membrane as a helical; Signal-anchor for type II membrane protein segment; sequence LLLFSLGLSLLLLVVISVIGS. The Extracellular segment spans residues 59–306; that stretch reads QNSQLRRDLE…VCEMKLAKDS (248 aa). Residues Asn-76 and Asn-168 are each glycosylated (N-linked (GlcNAc...) asparagine). Residues 174–300 form the C-type lectin domain; that stretch reads CCPLHWMEHE…QRPYRWVCEM (127 aa). 3 cysteine pairs are disulfide-bonded: Cys-175/Cys-186, Cys-203/Cys-298, and Cys-276/Cys-290.

Homooligomer.

It is found in the membrane. Functionally, recognizes terminal galactose and N-acetylgalactosamine units. This is C-type lectin domain family 10 member A (Clec10a) from Rattus norvegicus (Rat).